Consider the following 194-residue polypeptide: NADH-quinone oxidoreductase subunit B (194 aa).

Over residues 1 to 11 the composition is skewed to pro residues; the sequence is MGVIATPPPSV. The segment at 1 to 24 is disordered; it reads MGVIATPPPSVQGPSSQVPSSAPI. The span at 12–21 shows a compositional bias: low complexity; that stretch reads QGPSSQVPSS. [4Fe-4S] cluster is bound by residues C72, C73, C137, and C167.

It belongs to the complex I 20 kDa subunit family. As to quaternary structure, NDH-1 is composed of 14 different subunits. Subunits NuoB, C, D, E, F, and G constitute the peripheral sector of the complex. The cofactor is [4Fe-4S] cluster.

The protein resides in the cell inner membrane. The catalysed reaction is a quinone + NADH + 5 H(+)(in) = a quinol + NAD(+) + 4 H(+)(out). In terms of biological role, NDH-1 shuttles electrons from NADH, via FMN and iron-sulfur (Fe-S) centers, to quinones in the respiratory chain. The immediate electron acceptor for the enzyme in this species is believed to be ubiquinone. Couples the redox reaction to proton translocation (for every two electrons transferred, four hydrogen ions are translocated across the cytoplasmic membrane), and thus conserves the redox energy in a proton gradient. In Rhodospirillum centenum (strain ATCC 51521 / SW), this protein is NADH-quinone oxidoreductase subunit B.